A 520-amino-acid polypeptide reads, in one-letter code: GMP synthase [glutamine-hydrolyzing] (520 aa).

The Glutamine amidotransferase type-1 domain maps to Lys-13–Asp-205. The active-site Nucleophile is the Cys-90. Active-site residues include His-179 and Glu-181. A GMPS ATP-PPase domain is found at Trp-206 to Arg-395. ATP is bound at residue Ser-233–Ser-239.

Homodimer.

The catalysed reaction is XMP + L-glutamine + ATP + H2O = GMP + L-glutamate + AMP + diphosphate + 2 H(+). Its pathway is purine metabolism; GMP biosynthesis; GMP from XMP (L-Gln route): step 1/1. Its function is as follows. Catalyzes the synthesis of GMP from XMP. This chain is GMP synthase [glutamine-hydrolyzing], found in Streptococcus pneumoniae (strain CGSP14).